Reading from the N-terminus, the 223-residue chain is Putative HTLV-1-related endogenous sequence (223 aa).

Over residues 1 to 19 (MRCAHAPAPRTRYPTRAPS) the composition is skewed to low complexity. Residues 1-184 (MRCAHAPAPR…ARAHGEAGAG (184 aa)) form a disordered region. Over residues 115 to 126 (GDRRREGPDRSP) the composition is skewed to basic and acidic residues. The segment covering 133 to 157 (PAAAAQPDSSSAQAPGPSTLRPAAT) has biased composition (low complexity).

The protein is Putative HTLV-1-related endogenous sequence (HRES1) of Homo sapiens (Human).